Reading from the N-terminus, the 344-residue chain is N-acetyl-gamma-glutamyl-phosphate reductase (344 aa).

Cysteine 150 is an active-site residue.

This sequence belongs to the NAGSA dehydrogenase family. Type 1 subfamily.

It is found in the cytoplasm. It catalyses the reaction N-acetyl-L-glutamate 5-semialdehyde + phosphate + NADP(+) = N-acetyl-L-glutamyl 5-phosphate + NADPH + H(+). Its pathway is amino-acid biosynthesis; L-arginine biosynthesis; N(2)-acetyl-L-ornithine from L-glutamate: step 3/4. Its function is as follows. Catalyzes the NADPH-dependent reduction of N-acetyl-5-glutamyl phosphate to yield N-acetyl-L-glutamate 5-semialdehyde. The protein is N-acetyl-gamma-glutamyl-phosphate reductase of Pseudomonas fluorescens (strain Pf0-1).